The primary structure comprises 141 residues: Succinate dehydrogenase [ubiquinone] cytochrome b small subunit 2 (141 aa).

A mitochondrion-targeting transit peptide spans 1–24 (MSLIRCTTSKALKFRQLLKMAART). At 25–44 (SVTTPVSREPFSIEDHSLHF) the chain is on the mitochondrial matrix side. A helical transmembrane segment spans residues 45–63 (KIERYWAAGMIPLIPTAYF). Over 64-68 (IHTPA) the chain is Mitochondrial intermembrane. A helical membrane pass occupies residues 69-89 (MDAVLTVAIVLHVHWGIAGVV). A heme b-binding site is contributed by H80. Residues 90 to 104 (SDYARPFVIGDTLAR) are Mitochondrial matrix-facing. An a ubiquinone-binding site is contributed by Y92. The helical transmembrane segment at 105–126 (VARASVYIITVILLASLLHFNN) threads the bilayer. The Mitochondrial intermembrane segment spans residues 127-141 (SDVGLTKAFEMVWSL).

Belongs to the CybS family. As to quaternary structure, component of the mitochondrial electron transport chain complex II composed of four subunits: a flavoprotein (Fp), an iron-sulfur protein (Ip), and a large cytochrome b (CybL) subunit and a small cytochrome b (CybS) subunit. There are 2 developmental stage-specific forms of complex II which have the Ip and CybL subunits in common. Complex II from the free-living larvae (aerobic environment) acts as a succinate dehydrogenase and is composed of the common subunit Ip and CybL and the stage specific subunits FpL and CybSL. Complex II from parasitic larvae and adults (anaerobic environment) acts as a fumarate reductase and is composed of the common subunit Ip and CybL and the stage specific subunits FpA and CybSA. Heme b serves as cofactor.

Its subcellular location is the mitochondrion inner membrane. The protein operates within carbohydrate metabolism; tricarboxylic acid cycle; fumarate from succinate (eukaryal route): step 1/1. Its function is as follows. Membrane-bound small subunit (CybS) of the mitochondrial electron transport chain complex II, which together with the membrane-bound large subunit (CybL), anchor the catalytic subunits to the inner mitochondria membrane. During the free-living egg-larvae stages, which occur in an aerobic environment, complex II acts as a succinate dehydrogenase by transferring electrons from succinate to ubiquinone. The sequence is that of Succinate dehydrogenase [ubiquinone] cytochrome b small subunit 2 from Ascaris suum (Pig roundworm).